Here is a 482-residue protein sequence, read N- to C-terminus: 7-deoxyloganetic acid glucosyl transferase (482 aa).

Histidine 22 acts as the Proton acceptor in catalysis. An anthocyanidin is bound at residue histidine 22. Aspartate 127 (charge relay) is an active-site residue. Residues threonine 149, alanine 362, glutamine 364, histidine 379, tryptophan 382, asparagine 383, serine 384, and glutamate 387 each coordinate UDP-alpha-D-glucose. An anthocyanidin is bound at residue alanine 402. UDP-alpha-D-glucose contacts are provided by aspartate 403 and glutamine 404.

Belongs to the UDP-glycosyltransferase family. As to expression, expressed in the leaf internal phloem-associated parenchyma (IPAP) inside the mesophyll. Mostly observed in leaves, roots and stems, and, to a lower extent, in flowers.

It is found in the nucleus. The protein localises to the cytoplasm. It localises to the cytosol. It catalyses the reaction 7-deoxyloganetate + UDP-alpha-D-glucose = 7-deoxyloganate + UDP + H(+). It functions in the pathway alkaloid biosynthesis. Its function is as follows. Component of the seco-iridoid and derivatives monoterpenoid indole alkaloids (MIAs, e.g. vincristine, quinine, and strychnine) biosynthesis pathway. Catalyzes the glucosylation of 7-deoxyloganetic acid to form 7-deoxyloganic acid using UDP-glucose as the sugar donor. Inactive with loganetic acid, loganetin, iridodial, iridotrial, 8-OH-geraniol, jasmonic acid, gibberellic acid, indole acetic acid, salicylic acid, abscisic acid, zeatin and luteolin. In Catharanthus roseus (Madagascar periwinkle), this protein is 7-deoxyloganetic acid glucosyl transferase.